A 380-amino-acid polypeptide reads, in one-letter code: uncharacterized protein (380 aa).

Positions 287 to 318 (LRPKIYQDKCKNCRECLVEKYCPTFAIKRENG) constitute a 4Fe-4S ferredoxin-type domain.

This is an uncharacterized protein from Methanocaldococcus jannaschii (strain ATCC 43067 / DSM 2661 / JAL-1 / JCM 10045 / NBRC 100440) (Methanococcus jannaschii).